The primary structure comprises 82 residues: UPF0154 protein SMU_1719c (82 aa).

Residues 4–24 (FLWILLVIIALLAGLVGGTFI) form a helical membrane-spanning segment.

This sequence belongs to the UPF0154 family.

Its subcellular location is the membrane. This chain is UPF0154 protein SMU_1719c, found in Streptococcus mutans serotype c (strain ATCC 700610 / UA159).